A 373-amino-acid chain; its full sequence is NAD(P)H-quinone oxidoreductase subunit 1 (373 aa).

Transmembrane regions (helical) follow at residues 28 to 48 (LLWL…GVLV), 98 to 118 (LLFT…WLII), 129 to 149 (VGVG…GLLM), 167 to 187 (AAQS…IVMM), 205 to 225 (ILSW…ICAL), 267 to 287 (VLSA…PIPV), 309 to 329 (SVGI…AILL), and 348 to 368 (FLLP…LAFP).

This sequence belongs to the complex I subunit 1 family. In terms of assembly, NDH-1 is composed of at least 11 different subunits.

The protein localises to the cellular thylakoid membrane. The enzyme catalyses a plastoquinone + NADH + (n+1) H(+)(in) = a plastoquinol + NAD(+) + n H(+)(out). It carries out the reaction a plastoquinone + NADPH + (n+1) H(+)(in) = a plastoquinol + NADP(+) + n H(+)(out). NDH-1 shuttles electrons from an unknown electron donor, via FMN and iron-sulfur (Fe-S) centers, to quinones in the respiratory and/or the photosynthetic chain. The immediate electron acceptor for the enzyme in this species is believed to be plastoquinone. Couples the redox reaction to proton translocation, and thus conserves the redox energy in a proton gradient. The polypeptide is NAD(P)H-quinone oxidoreductase subunit 1 (Parasynechococcus marenigrum (strain WH8102)).